A 192-amino-acid polypeptide reads, in one-letter code: UPF0301 protein Jann_3896 (192 aa).

The protein belongs to the UPF0301 (AlgH) family.

This is UPF0301 protein Jann_3896 from Jannaschia sp. (strain CCS1).